A 666-amino-acid chain; its full sequence is Polyamine deacetylase HDAC10 (666 aa).

The interval 1 to 323 (MGTALVYHED…VCMMVQTLLG (323 aa)) is histone deacetylase. Residue H135 is part of the active site.

It belongs to the histone deacetylase family. HD type 2 subfamily. In terms of assembly, interacts with HDAC3. Interacts with HDAC2 and NCOR2/SMRT. Interacts with HSPA8/HSC70. Interacts with MSH2. In terms of tissue distribution, widely expressed.

Its subcellular location is the cytoplasm. It localises to the nucleus. It carries out the reaction N(8)-acetylspermidine + H2O = spermidine + acetate. It catalyses the reaction N-acetylputrescine + H2O = putrescine + acetate. The enzyme catalyses N-acetylcadaverine + H2O = cadaverine + acetate. The catalysed reaction is N(6)-acetyl-L-lysyl-[protein] + H2O = L-lysyl-[protein] + acetate. Its function is as follows. Polyamine deacetylase (PDAC), which acts preferentially on N(8)-acetylspermidine, and also on acetylcadaverine and acetylputrescine. Exhibits attenuated catalytic activity toward N(1),N(8)-diacetylspermidine and very low activity, if any, toward N(1)-acetylspermidine. Histone deacetylase activity has been observed in vitro. Has also been shown to be involved in MSH2 deacetylation. The physiological relevance of protein/histone deacetylase activity is unclear and could be very weak. May play a role in the promotion of late stages of autophagy, possibly autophagosome-lysosome fusion and/or lysosomal exocytosis in neuroblastoma cells. May play a role in homologous recombination. May promote DNA mismatch repair. This chain is Polyamine deacetylase HDAC10 (Hdac10), found in Mus musculus (Mouse).